Consider the following 284-residue polypeptide: Tropomyosin Lep s 1.0101 (284 aa).

The stretch at 1–273 (MEAIKKKMQA…KDRYRALADE (273 aa)) forms a coiled coil. The span at 155–171 (AEDADGKSDEVSRKMAQ) shows a compositional bias: basic and acidic residues. Residues 155 to 187 (AEDADGKSDEVSRKMAQVEDDLEVAEDRVKSGD) are disordered.

The protein belongs to the tropomyosin family. In terms of assembly, homodimer.

In terms of biological role, tropomyosin, in association with the troponin complex, plays a central role in the calcium dependent regulation of muscle contraction. The chain is Tropomyosin Lep s 1.0101 from Lepisma saccharinum (Silverfish).